The sequence spans 890 residues: Alanine--tRNA ligase (890 aa).

H564, H568, C677, and H681 together coordinate Zn(2+).

This sequence belongs to the class-II aminoacyl-tRNA synthetase family. Requires Zn(2+) as cofactor.

The protein localises to the cytoplasm. The catalysed reaction is tRNA(Ala) + L-alanine + ATP = L-alanyl-tRNA(Ala) + AMP + diphosphate. In terms of biological role, catalyzes the attachment of alanine to tRNA(Ala) in a two-step reaction: alanine is first activated by ATP to form Ala-AMP and then transferred to the acceptor end of tRNA(Ala). Also edits incorrectly charged Ser-tRNA(Ala) and Gly-tRNA(Ala) via its editing domain. The protein is Alanine--tRNA ligase of Rhodopseudomonas palustris (strain BisB18).